Reading from the N-terminus, the 359-residue chain is CCAAT/enhancer-binding protein alpha (359 aa).

The segment at 1-55 (MESADFYEVEPRPPMSSHLQSPPHAPSNAAFGFPRGAGPAPPPAPPAAPEPLGGI) is disordered. Positions 1 to 70 (MESADFYEVE…SIDISAYIDP (70 aa)) are required to repress E2F1:TFDP1-mediated transcription, to inhibit cell cycle and to induce adipocyte differentiation. Residues 29–38 (AAFGFPRGAG) show a composition bias toward low complexity. Over residues 39-49 (PAPPPAPPAAP) the composition is skewed to pro residues. Residues 54 to 72 (GICEHETSIDISAYIDPAA) form a required for interaction with TRIB1 region. A required to induce adipocyte differentiation region spans residues 126 to 200 (PPGYGCAAAG…HASPAHLAAP (75 aa)). The residue at position 159 (lysine 159) is an N6-acetyllysine; alternate. Residue lysine 159 forms a Glycyl lysine isopeptide (Lys-Gly) (interchain with G-Cter in SUMO); alternate linkage. Lysine 159 is covalently cross-linked (Glycyl lysine isopeptide (Lys-Gly) (interchain with G-Cter in SUMO2); alternate). Disordered regions lie at residues 176–195 (LFPY…ASPA) and 213–293 (TMHL…RERN). The span at 179 to 191 (YQPPPPPPPPHPH) shows a compositional bias: pro residues. The interval 180–194 (QPPPPPPPPHPHASP) is required to functionally cooperate with SREBF1 in promoter activation. The residue at position 193 (serine 193) is a Phosphoserine. The span at 220 to 232 (HPTPPPTPVPSPH) shows a compositional bias: pro residues. Phosphothreonine; by GSK3 occurs at positions 222 and 226. A Phosphoserine; by GSK3 modification is found at serine 230. The segment covering 233-255 (AAPALGAAGLPGPGSALKGLAGA) has biased composition (low complexity). The tract at residues 240–359 (AGLPGPGSAL…SLVKAMGNCA (120 aa)) is interaction with FOXO1. Over residues 261–272 (TGGGGGGSGAGA) the composition is skewed to gly residues. Residues 277-293 (KSVDKNSNEYRVRRERN) show a composition bias toward basic and acidic residues. One can recognise a bZIP domain in the interval 283-346 (SNEYRVRRER…DTLRGIFRQL (64 aa)). A DNA-binding region spans residues 286-301 (YRVRRERNNIAVRKSR). Positions 287-314 (RVRRERNNIAVRKSRDKAKQRNVETQQK) are basic motif. The tract at residues 318–346 (LTSDNDRLRKRVEQLSRELDTLRGIFRQL) is leucine-zipper.

Belongs to the bZIP family. C/EBP subfamily. As to quaternary structure, binds DNA as a homodimer and as a heterodimer. Can form stable heterodimers with CEBPB, CEBPD, CEBPE and CEBPG. Interacts with PRDM16. Interacts with UBN1. Interacts with ZNF638; this interaction increases transcriptional activation. Interacts with the complex TFDP2:E2F1; the interaction prevents CEBPA binding to target gene promoters and represses its transcriptional activity. Interacts with RB1. Interacts (when phosphorylated at Ser-193) with CDK2, CDK4, E2F4 and SMARCA2. Interacts with SREBPF1. Interacts with FOXO1 (via the Fork-head domain); the interaction increases when FOXO1 is deacetylated. Interacts with SIX1. Interacts (via recognition sequence) with TRIB1. Interacts (via bZIP domain) with OVOL2 (via zinc-finger domains); the interaction inhibits the transcription factor activity of CEBPA and is required to repress adipogenesis. Interacts with TAF1A and UBTF. In terms of assembly, interacts with TAF1A and UBTF. Interacts with NPM1. Sumoylated, sumoylation blocks the inhibitory effect on cell proliferation by disrupting the interaction with SMARCA2. Post-translationally, phosphorylation at Ser-193 is required for interaction with CDK2, CDK4 and SWI/SNF complex leading to cell cycle inhibition. Dephosphorylated at Ser-193 by protein phosphatase 2A (PP2A) through PI3K/AKT signaling pathway regulation. Phosphorylation at Thr-222 and Thr-226 by GSK3 is constitutive in adipose tissue and lung. In liver, both Thr-222 and Thr-226 are phosphorylated only during feeding but not during fasting. Phosphorylation of the GSK3 consensus sites selectively decreases transactivation activity on IRE-controlled promoters. In terms of processing, ubiquitinated by COP1 upon interaction with TRIB1. Isoform 2 and isoform 3 are expressed in adipose tissue and liver (at protein level).

Its subcellular location is the nucleus. The protein resides in the nucleolus. In terms of biological role, transcription factor that coordinates proliferation arrest and the differentiation of myeloid progenitors, adipocytes, hepatocytes, and cells of the lung and the placenta. Binds directly to the consensus DNA sequence 5'-T[TG]NNGNAA[TG]-3' acting as an activator on distinct target genes. During early embryogenesis, plays essential and redundant functions with CEBPB. Essential for the transition from common myeloid progenitors (CMP) to granulocyte/monocyte progenitors (GMP). Critical for the proper development of the liver and the lung. Necessary for terminal adipocyte differentiation, is required for postnatal maintenance of systemic energy homeostasis and lipid storage. To regulate these different processes at the proper moment and tissue, interplays with other transcription factors and modulators. Down-regulates the expression of genes that maintain cells in an undifferentiated and proliferative state through E2F1 repression, which is critical for its ability to induce adipocyte and granulocyte terminal differentiation. Reciprocally E2F1 blocks adipocyte differentiation by binding to specific promoters and repressing CEBPA binding to its target gene promoters. Proliferation arrest also depends on a functional binding to SWI/SNF complex. In liver, regulates gluconeogenesis and lipogenesis through different mechanisms. To regulate gluconeogenesis, functionally cooperates with FOXO1 binding to IRE-controlled promoters and regulating the expression of target genes such as PCK1 or G6PC1. To modulate lipogenesis, interacts and transcriptionally synergizes with SREBF1 in promoter activation of specific lipogenic target genes such as ACAS2. In adipose tissue, seems to act as FOXO1 coactivator accessing to ADIPOQ promoter through FOXO1 binding sites. Its function is as follows. Can act as dominant-negative. Binds DNA and have transctivation activity, even if much less efficiently than isoform 2. Does not inhibit cell proliferation. Directly and specifically enhances ribosomal DNA transcription interacting with RNA polymerase I-specific cofactors and inducing histone acetylation. The sequence is that of CCAAT/enhancer-binding protein alpha from Mus musculus (Mouse).